Here is an 89-residue protein sequence, read N- to C-terminus: Small ribosomal subunit protein uS15 (89 aa).

It belongs to the universal ribosomal protein uS15 family. Part of the 30S ribosomal subunit. Forms a bridge to the 50S subunit in the 70S ribosome, contacting the 23S rRNA.

In terms of biological role, one of the primary rRNA binding proteins, it binds directly to 16S rRNA where it helps nucleate assembly of the platform of the 30S subunit by binding and bridging several RNA helices of the 16S rRNA. Its function is as follows. Forms an intersubunit bridge (bridge B4) with the 23S rRNA of the 50S subunit in the ribosome. This is Small ribosomal subunit protein uS15 from Pasteurella multocida (strain Pm70).